The chain runs to 336 residues: Phosphate acyltransferase (336 aa).

The protein belongs to the PlsX family. As to quaternary structure, homodimer. Probably interacts with PlsY.

It is found in the cytoplasm. The enzyme catalyses a fatty acyl-[ACP] + phosphate = an acyl phosphate + holo-[ACP]. The protein operates within lipid metabolism; phospholipid metabolism. Functionally, catalyzes the reversible formation of acyl-phosphate (acyl-PO(4)) from acyl-[acyl-carrier-protein] (acyl-ACP). This enzyme utilizes acyl-ACP as fatty acyl donor, but not acyl-CoA. This Pseudomonas putida (strain GB-1) protein is Phosphate acyltransferase.